Consider the following 297-residue polypeptide: Endonuclease G, mitochondrial (297 aa).

Residues 1–48 constitute a mitochondrion transit peptide; the sequence is MRALRAGLTLASGAGLGAVVEGWRRRREDARAAPGLLGRLPVLPVAAA. Phosphothreonine; by GSK3-beta is present on Thr-128. Residue His-141 is the Proton acceptor of the active site. Asn-172 serves as a coordination point for Mg(2+). Residues 286–296 are essential for deoxyribonuclease activity; that stretch reads AGSLKAITAGS. Ser-288 is modified (phosphoserine; by GSK3-beta).

The protein belongs to the DNA/RNA non-specific endonuclease family. As to quaternary structure, homodimer; disulfide-linked. Homodimerization is essential for enzyme activity. Interacts with YWHAG. It depends on Mg(2+) as a cofactor. In terms of processing, GSK3-beta-mediated dual phosphorylations at Thr-128 and Ser-288 is necessary for its interaction with YWHAG and the induction of autophagy.

It is found in the mitochondrion. Functionally, endonuclease that preferentially catalyzes the cleavage of double-stranded 5-hydroxymethylcytosine (5hmC)-modified DNA. The 5hmC-modified nucleotide does not increase the binding affinity, but instead increases the efficiency of cutting and specifies the site of cleavage for the modified DNAs. Shows significantly higher affinity for four-stranded Holliday junction over duplex and single-stranded DNAs. Promotes conservative recombination when the DNA is 5hmC-modified. Promotes autophagy through the suppression of mTOR by its phosphorylation-mediated interaction with YWHAG and its endonuclease activity-mediated DNA damage response. GSK3-beta mediated phosphorylation of ENDOG enhances its interaction with YWHAG, leading to the release of TSC2 and PIK3C3 from YWHAG resulting in mTOR pathway suppression and autophagy initiation. Promotes cleavage of mtDNA in response to oxidative and nitrosative stress, in turn inducing compensatory mtDNA replication. The protein is Endonuclease G, mitochondrial (ENDOG) of Homo sapiens (Human).